A 431-amino-acid polypeptide reads, in one-letter code: Signal recognition particle 54 kDa protein (431 aa).

GTP-binding positions include 105–112 (GVEGSGKT), 185–189 (DTAGR), and 243–246 (TKMD).

It belongs to the GTP-binding SRP family. SRP54 subfamily. In terms of assembly, part of the signal recognition particle protein translocation system, which is composed of SRP and FtsY. Archaeal SRP consists of a 7S RNA molecule of 300 nucleotides and two protein subunits: SRP54 and SRP19.

The protein resides in the cytoplasm. It carries out the reaction GTP + H2O = GDP + phosphate + H(+). Functionally, involved in targeting and insertion of nascent membrane proteins into the cytoplasmic membrane. Binds to the hydrophobic signal sequence of the ribosome-nascent chain (RNC) as it emerges from the ribosomes. The SRP-RNC complex is then targeted to the cytoplasmic membrane where it interacts with the SRP receptor FtsY. The polypeptide is Signal recognition particle 54 kDa protein (Pyrobaculum calidifontis (strain DSM 21063 / JCM 11548 / VA1)).